Here is a 375-residue protein sequence, read N- to C-terminus: Trans-enoyl reductase cghC (375 aa).

48-51 (VDTK) is a binding site for NADP(+). A substrate-binding site is contributed by 135 to 142 (NAWYTSGW). NADP(+) contacts are provided by residues 188 to 191 (SSST), 211 to 214 (SARN), and 276 to 277 (LD). 297–301 (GPELV) contacts substrate. 366–367 (VS) serves as a coordination point for NADP(+).

It belongs to the zinc-containing alcohol dehydrogenase family. In terms of assembly, monomer.

The catalysed reaction is (2S,4S)-4-hydroxy-4-methylglutamate + 8 malonyl-CoA + 3 S-adenosyl-L-methionine + ATP + 8 NADPH + 11 H(+) = (2S)-3-[(2S)-3,5-dioxo-4-[(2E,4R,6R,8E,10E,12E)-4,6,12-trimethyltetradeca-2,8,10,12-tetraenoyl]pyrrolidin-2-yl]-2-hydroxy-2-methylpropanoate + AMP + 3 S-adenosyl-L-homocysteine + 8 CO2 + diphosphate + 8 NADP(+) + 8 CoA + 6 H2O. It participates in secondary metabolite biosynthesis. Trans-enoyl reductase; part of the gene cluster that mediates the biosynthesis of the tetramic acid Sch210972, a potential anti-HIV fungal natural product that contains a decalin core. The PKS module of cghG together with the enoylreductase cghC catalyze the formation of the polyketide unit which is then conjugated to 4-hydroxyl-4-methyl glutamate (HMG) by the condensation domain of the cghG NRPS module. One unique structural feature of Sch210972 is the tetramic acid motif proposed to be derived from the non-proteinogenic amino acid HMG, by a Dieckmann-type condensation catalyzed by the reductase domain of cghG. The aldolase cghB catalyzes the aldol condensation of 2 molecules of pyruvic acid to yield the intermediate 4-hydroxyl-4-methyl-2-oxoglutarate (HMOG), which can then be stereoselectively transaminated by an unidentified enzyme to form HMG. The Diels-Alderase cghA then uses the Dieckmann product released by cghG as substrate and catalyzes the Diels-Alder cycloaddition to form the decalin ring of Sch210972. CghA also suppresses the nonenzymatic formation of the alternative stereoisomer. The chain is Trans-enoyl reductase cghC from Chaetomium globosum (strain ATCC 6205 / CBS 148.51 / DSM 1962 / NBRC 6347 / NRRL 1970) (Soil fungus).